A 663-amino-acid polypeptide reads, in one-letter code: UvrABC system protein B (663 aa).

The segment covering 1-10 (MIDKRDDKPF) has biased composition (basic and acidic residues). Positions 1–23 (MIDKRDDKPFKLKSKYKPSGDQP) are disordered. The Helicase ATP-binding domain occupies 31-271 (DNIEGGEKAQ…EQSIAKIQAE (241 aa)). 44–51 (GATGTGKT) is a binding site for ATP. Residues 97 to 120 (YYDYYQPEAYVPSSDTYIEKDSSV) carry the Beta-hairpin motif. The region spanning 435–601 (QIDDLLGEIN…TIKKDIRGLI (167 aa)) is the Helicase C-terminal domain. The UVR domain maps to 627 to 662 (KEAINALQKQMQEAAELLDFELAAQMRDLILELKLM).

The protein belongs to the UvrB family. In terms of assembly, forms a heterotetramer with UvrA during the search for lesions. Interacts with UvrC in an incision complex.

It is found in the cytoplasm. In terms of biological role, the UvrABC repair system catalyzes the recognition and processing of DNA lesions. A damage recognition complex composed of 2 UvrA and 2 UvrB subunits scans DNA for abnormalities. Upon binding of the UvrA(2)B(2) complex to a putative damaged site, the DNA wraps around one UvrB monomer. DNA wrap is dependent on ATP binding by UvrB and probably causes local melting of the DNA helix, facilitating insertion of UvrB beta-hairpin between the DNA strands. Then UvrB probes one DNA strand for the presence of a lesion. If a lesion is found the UvrA subunits dissociate and the UvrB-DNA preincision complex is formed. This complex is subsequently bound by UvrC and the second UvrB is released. If no lesion is found, the DNA wraps around the other UvrB subunit that will check the other stand for damage. The sequence is that of UvrABC system protein B from Streptococcus pyogenes serotype M5 (strain Manfredo).